Reading from the N-terminus, the 310-residue chain is MKTLIRKFSRTAITVVLVILAFIAIFNAWVYYTESPWTRDARFSADVVAIAPDVSGLITQVNVHDNQLVKKGQVLFTIDQPRYQKALEEAQADVAYYQVLAQEKRQEAGRRNRLGVQAMSREEIDQANNVLQTVLHQLAKAQATRDLAKLDLERTVIRAPADGWVTNLNVYTGEFITRGSTAVALVKQNSFYVLAYMEETKLEGVRPGYRAEITPLGSNKVLKGTVDSVAAGVTNASSTSDDKGMATIDSNLEWVRLAQRVPVRIRLDNQQENIWPAGTTATVVVTGKQDRDESQDSFFRKMAHRLREFG.

The chain crosses the membrane as a helical span at residues Ala-12–Tyr-32.

Belongs to the membrane fusion protein (MFP) (TC 8.A.1) family.

Its subcellular location is the cell inner membrane. Forms an efflux pump with AaeB. The polypeptide is p-hydroxybenzoic acid efflux pump subunit AaeA (Escherichia coli O17:K52:H18 (strain UMN026 / ExPEC)).